A 249-amino-acid chain; its full sequence is tRNA(Phe) (4-demethylwyosine(37)-C(7)) aminocarboxypropyltransferase (249 aa).

S-adenosyl-L-methionine contacts are provided by residues Ser80, Arg87, Glu127, and 154–155; that span reads DN.

This sequence belongs to the class I-like SAM-binding methyltransferase superfamily. TRM5/TYW2 family.

It is found in the cytoplasm. The enzyme catalyses 4-demethylwyosine(37) in tRNA(Phe) + S-adenosyl-L-methionine = 4-demethyl-7-[(3S)-3-amino-3-carboxypropyl]wyosine(37) in tRNA(Phe) + S-methyl-5'-thioadenosine + H(+). Its function is as follows. S-adenosyl-L-methionine-dependent transferase that acts as a component of the wyosine derivatives biosynthesis pathway. Catalyzes the transfer of the alpha-amino-alpha-carboxypropyl (acp) group from S-adenosyl-L-methionine to 4-demethylwyosine (imG-14), forming 7-aminocarboxypropyl-demethylwyosine (wybutosine-86) at position 37 of tRNA(Phe). The sequence is that of tRNA(Phe) (4-demethylwyosine(37)-C(7)) aminocarboxypropyltransferase from Methanocaldococcus jannaschii (strain ATCC 43067 / DSM 2661 / JAL-1 / JCM 10045 / NBRC 100440) (Methanococcus jannaschii).